The following is a 505-amino-acid chain: Deoxyguanosinetriphosphate triphosphohydrolase (505 aa).

Positions 66–273 (RLTHSMEVQQ…MEAADDISYC (208 aa)) constitute an HD domain.

Belongs to the dGTPase family. Type 1 subfamily. In terms of assembly, homotetramer. The cofactor is Mg(2+).

It catalyses the reaction dGTP + H2O = 2'-deoxyguanosine + triphosphate + H(+). Functionally, dGTPase preferentially hydrolyzes dGTP over the other canonical NTPs. This chain is Deoxyguanosinetriphosphate triphosphohydrolase, found in Shigella flexneri.